Reading from the N-terminus, the 595-residue chain is Chaperone protein HscA homolog (595 aa).

It belongs to the heat shock protein 70 family.

Its function is as follows. Chaperone involved in the maturation of iron-sulfur cluster-containing proteins. Has a low intrinsic ATPase activity which is markedly stimulated by HscB. This Rickettsia conorii (strain ATCC VR-613 / Malish 7) protein is Chaperone protein HscA homolog.